The chain runs to 955 residues: Kinesin-like protein KIN-14L (955 aa).

In terms of domain architecture, Calponin-homology (CH) spans Ala19–Glu140. Residues Asn363–Val685 form the Kinesin motor domain. Gly445 to Thr452 serves as a coordination point for ATP. A coiled-coil region spans residues Ala692–Asn719. The disordered stretch occupies residues Arg878–Asp942. Residues Asn894–Thr916 are compositionally biased toward polar residues.

This sequence belongs to the TRAFAC class myosin-kinesin ATPase superfamily. Kinesin family. KIN-14 subfamily.

This Arabidopsis thaliana (Mouse-ear cress) protein is Kinesin-like protein KIN-14L.